Reading from the N-terminus, the 1399-residue chain is DNA-directed RNA polymerase subunit beta' (1399 aa).

Cysteine 70, cysteine 72, cysteine 85, and cysteine 88 together coordinate Zn(2+). Mg(2+) contacts are provided by aspartate 460, aspartate 462, and aspartate 464. Positions 814, 888, 895, and 898 each coordinate Zn(2+).

Belongs to the RNA polymerase beta' chain family. In terms of assembly, the RNAP catalytic core consists of 2 alpha, 1 beta, 1 beta' and 1 omega subunit. When a sigma factor is associated with the core the holoenzyme is formed, which can initiate transcription. Mg(2+) is required as a cofactor. The cofactor is Zn(2+).

The enzyme catalyses RNA(n) + a ribonucleoside 5'-triphosphate = RNA(n+1) + diphosphate. DNA-dependent RNA polymerase catalyzes the transcription of DNA into RNA using the four ribonucleoside triphosphates as substrates. The sequence is that of DNA-directed RNA polymerase subunit beta' from Pseudomonas putida (strain W619).